A 287-amino-acid polypeptide reads, in one-letter code: Nucleoid occlusion protein (287 aa).

Residues 146–165 (EALAQRVGKSQSAIANKMRL) constitute a DNA-binding region (H-T-H motif).

The protein belongs to the ParB family.

Its subcellular location is the cytoplasm. The protein localises to the nucleoid. Effects nucleoid occlusion by binding relatively nonspecifically to DNA and preventing the assembly of the division machinery in the vicinity of the nucleoid, especially under conditions that disturb the cell cycle. It helps to coordinate cell division and chromosome segregation by preventing the formation of the Z ring through the nucleoid, which would cause chromosome breakage. This Listeria monocytogenes serotype 4a (strain HCC23) protein is Nucleoid occlusion protein.